The primary structure comprises 587 residues: APOBEC1 complementation factor (587 aa).

RRM domains lie at C56–D134, C136–P218, and K231–P303. The interval H360–K409 is required for nuclear localization. T491 is modified (phosphothreonine).

As to quaternary structure, part of the apolipoprotein B mRNA editing complex with APOBEC1. Interacts with TNPO2; TNPO2 may be responsible for transport of A1CF into the nucleus. Interacts with SYNCRIP. Interacts with CELF2/CUGBP2. Interacts with RBM47.

It is found in the nucleus. It localises to the endoplasmic reticulum. Its subcellular location is the cytoplasm. Its function is as follows. Essential component of the apolipoprotein B mRNA editing enzyme complex which is responsible for the postranscriptional editing of a CAA codon for Gln to a UAA codon for stop in APOB mRNA. Binds to APOB mRNA and is probably responsible for docking the catalytic subunit, APOBEC1, to the mRNA to allow it to deaminate its target cytosine. The complex also seems to protect the edited APOB mRNA from nonsense-mediated decay. The sequence is that of APOBEC1 complementation factor (A1CF) from Pongo abelii (Sumatran orangutan).